The primary structure comprises 169 residues: Shikimate kinase (169 aa).

13 to 18 (GAGKST) is a binding site for ATP. Serine 17 contacts Mg(2+). Residues aspartate 35, arginine 59, and glycine 80 each contribute to the substrate site. Residue arginine 117 participates in ATP binding. Residue arginine 136 participates in substrate binding. ATP is bound at residue arginine 153.

It belongs to the shikimate kinase family. As to quaternary structure, monomer. It depends on Mg(2+) as a cofactor.

The protein localises to the cytoplasm. The catalysed reaction is shikimate + ATP = 3-phosphoshikimate + ADP + H(+). It functions in the pathway metabolic intermediate biosynthesis; chorismate biosynthesis; chorismate from D-erythrose 4-phosphate and phosphoenolpyruvate: step 5/7. Functionally, catalyzes the specific phosphorylation of the 3-hydroxyl group of shikimic acid using ATP as a cosubstrate. The polypeptide is Shikimate kinase (Corynebacterium glutamicum (strain ATCC 13032 / DSM 20300 / JCM 1318 / BCRC 11384 / CCUG 27702 / LMG 3730 / NBRC 12168 / NCIMB 10025 / NRRL B-2784 / 534)).